The chain runs to 946 residues: Glucoamylase 1 (946 aa).

The N-terminal stretch at 1 to 20 (MKLLSKVFVTALGLTSIVNA) is a signal peptide. Residues Asn-51, Asn-68, Asn-97, Asn-187, Asn-244, Asn-373, Asn-393, Asn-406, and Asn-437 are each glycosylated (N-linked (GlcNAc...) asparagine). Catalysis depends on residues Asp-462 and Glu-465. A glycan (N-linked (GlcNAc...) asparagine) is linked at Asn-505. A compositionally biased stretch (low complexity) spans 517–532 (AATKTTTTTSSSTSTS). Positions 517 to 541 (AATKTTTTTSSSTSTSIDGKNTLAP) are disordered. Asn-570 carries N-linked (GlcNAc...) asparagine glycosylation. Asp-628 (proton donor) is an active-site residue. N-linked (GlcNAc...) asparagine glycans are attached at residues Asn-704, Asn-772, Asn-801, Asn-895, and Asn-912.

It belongs to the glycosyl hydrolase 31 family. Post-translationally, the N-terminus is blocked.

It localises to the secreted. The protein resides in the cell wall. Its subcellular location is the membrane. The enzyme catalyses Hydrolysis of terminal (1-&gt;4)-linked alpha-D-glucose residues successively from non-reducing ends of the chains with release of beta-D-glucose.. The chain is Glucoamylase 1 (GAM1) from Candida albicans (strain SC5314 / ATCC MYA-2876) (Yeast).